The chain runs to 289 residues: 33 kDa chaperonin (289 aa).

Cystine bridges form between Cys225/Cys227 and Cys258/Cys261.

This sequence belongs to the HSP33 family. Post-translationally, under oxidizing conditions two disulfide bonds are formed involving the reactive cysteines. Under reducing conditions zinc is bound to the reactive cysteines and the protein is inactive.

The protein localises to the cytoplasm. Its function is as follows. Redox regulated molecular chaperone. Protects both thermally unfolding and oxidatively damaged proteins from irreversible aggregation. Plays an important role in the bacterial defense system toward oxidative stress. This chain is 33 kDa chaperonin, found in Nitrosococcus oceani (strain ATCC 19707 / BCRC 17464 / JCM 30415 / NCIMB 11848 / C-107).